Reading from the N-terminus, the 247-residue chain is Sugar fermentation stimulation protein homolog (247 aa).

This sequence belongs to the SfsA family.

The sequence is that of Sugar fermentation stimulation protein homolog from Methylorubrum populi (strain ATCC BAA-705 / NCIMB 13946 / BJ001) (Methylobacterium populi).